A 291-amino-acid chain; its full sequence is MKQVQLKSRAKINLSLDVLGRRSDGYHEVEMIMQQIDLYDLITLEERKDSEIRISTQCEFIPTNEDNIAYRAAEIIRENSGINRGVNIYIDKRIPVAAGLAGGSSNAAAVLEGLNHMWRLRLTPKQLMDLGVKLGADVPFCILGGAAIARGIGEILTPIEGLKNVWMVIAKPAISVSTAEVYRQLDLSKLDSRPNTDEVIQAVKEGDLYTLAGKMHNVLESVTQRNHPIIREMKRKMLEYNAIGAMMSGSGPTVFGIYKNYGRAKSAYENLSILYKQTHLVQSYSRRKWDE.

Lysine 11 is an active-site residue. 95 to 105 (PVAAGLAGGSS) lines the ATP pocket. Aspartate 137 is a catalytic residue.

It belongs to the GHMP kinase family. IspE subfamily.

The enzyme catalyses 4-CDP-2-C-methyl-D-erythritol + ATP = 4-CDP-2-C-methyl-D-erythritol 2-phosphate + ADP + H(+). Its pathway is isoprenoid biosynthesis; isopentenyl diphosphate biosynthesis via DXP pathway; isopentenyl diphosphate from 1-deoxy-D-xylulose 5-phosphate: step 3/6. In terms of biological role, catalyzes the phosphorylation of the position 2 hydroxy group of 4-diphosphocytidyl-2C-methyl-D-erythritol. The chain is 4-diphosphocytidyl-2-C-methyl-D-erythritol kinase from Alkaliphilus metalliredigens (strain QYMF).